Reading from the N-terminus, the 385-residue chain is Isocitrate dehydrogenase [NAD] subunit beta, mitochondrial (385 aa).

The N-terminal 33 residues, 1–33 (MAALSRVRWLTRALVAAPNPGAWRSLCTSTVAQ), are a transit peptide targeting the mitochondrion. An N6-acetyllysine modification is found at K199.

The protein belongs to the isocitrate and isopropylmalate dehydrogenases family. As to quaternary structure, heterooligomer of subunits alpha (IDH3A), beta (IDH3B), and gamma (IDH3G) in the apparent ratio of 2:1:1. The heterodimer containing one IDH3A and one IDH3B subunit and the heterodimer containing one IDH3A and one IDH3G subunit assemble into a heterotetramer (which contains two subunits of IDH3A, one of IDH3B and one of IDH3G) and further into the heterooctamer. As to expression, isoform A is predominant in heart muscle; also found in brain, kidney and liver. Isoform B is present in kidney and liver.

It is found in the mitochondrion. With respect to regulation, the heterotetramer and the heterodimer composed of IDH3A and IDH3G subunits can be allosterically activated by citrate (CIT) or/and ADP, and the two activators can act independently or synergistically. The heterodimer composed of IDH3A and IDH3B subunits cannot be allosterically regulated and the allosteric regulation of the heterotetramer is through the IDH3G subunit and not the IDH3B subunit. The IDH3G subunit contains the allosteric site which consists of a CIT-binding site and an ADP-binding site, and the binding of CIT and ADP causes conformational changes at the allosteric site which are transmitted to the active site in the catalytic subunit (IDH3A) through a cascade of conformational changes at the heterodimer interface, leading to stabilization of the isocitrate-binding at the active site and thus activation of the enzyme. ATP can activate the heterotetramer and the heterodimer composed of IDH3A and IDH3G subunits at low concentrations but inhibits their activities at high concentrations, whereas ATP exhibits only inhibitory effect on the heterodimer composed of IDH3A and IDH3B subunits. Its function is as follows. Plays a structural role to facilitate the assembly and ensure the full activity of the enzyme catalyzing the decarboxylation of isocitrate (ICT) into alpha-ketoglutarate. The heterodimer composed of the alpha (IDH3A) and beta (IDH3B) subunits and the heterodimer composed of the alpha (IDH3A) and gamma (IDH3G) subunits, have considerable basal activity but the full activity of the heterotetramer (containing two subunits of IDH3A, one of IDH3B and one of IDH3G) requires the assembly and cooperative function of both heterodimers. This Bos taurus (Bovine) protein is Isocitrate dehydrogenase [NAD] subunit beta, mitochondrial (IDH3B).